Reading from the N-terminus, the 156-residue chain is Baculoviral IAP repeat-containing protein 5.2 (156 aa).

The stretch at 30–100 is one BIR repeat; sequence RLSTFANWPF…KHSPSCLFIA (71 aa). At threonine 46 the chain carries Phosphothreonine; by CDK1. Zn(2+) contacts are provided by cysteine 69, cysteine 72, histidine 89, and cysteine 96.

The protein belongs to the IAP family. As to quaternary structure, component of the CPC at least composed of survivin/birc5, incenp, cdca8/borealin and/or cdca9/dasra-A, and aurkb/aurora-B. Interacts directly with incenp (via N-terminus). Interacts with rxra; the interaction is stronger in the absence of 9-cis retinoic acids. Post-translationally, ubiquitination is required for centrosome-targeting.

The protein localises to the cytoplasm. Its subcellular location is the nucleus. It localises to the chromosome. It is found in the centromere. The protein resides in the cytoskeleton. The protein localises to the spindle. In terms of biological role, component of the chromosomal passenger complex (CPC), a complex that acts as a key regulator of mitosis. The CPC complex has essential functions at the centromere in ensuring correct chromosome alignment and segregation and is required for chromatin-induced microtubule stabilization and spindle assembly. Does not appear to exhibit anti-apoptotic activity. Plays a role in increasing blood vessel size during development. This Xenopus tropicalis (Western clawed frog) protein is Baculoviral IAP repeat-containing protein 5.2 (birc5.2).